The following is a 555-amino-acid chain: Glycerol dehydratase large subunit (555 aa).

Belongs to the diol/glycerol dehydratase large subunit family. In terms of assembly, probably consists of three subunits: large, medium, and small. Adenosylcob(III)alamin is required as a cofactor.

It carries out the reaction glycerol = 3-hydroxypropanal + H2O. The polypeptide is Glycerol dehydratase large subunit (dhaB) (Citrobacter freundii).